The primary structure comprises 440 residues: UDP-N-acetylglucosamine 1-carboxyvinyltransferase (440 aa).

22 to 23 is a phosphoenolpyruvate binding site; sequence KN. Residue arginine 102 participates in UDP-N-acetyl-alpha-D-glucosamine binding. Cysteine 126 acts as the Proton donor in catalysis. Cysteine 126 bears the 2-(S-cysteinyl)pyruvic acid O-phosphothioketal mark. UDP-N-acetyl-alpha-D-glucosamine-binding positions include 131–135, aspartate 320, and isoleucine 342; that span reads RPVDQ.

This sequence belongs to the EPSP synthase family. MurA subfamily.

Its subcellular location is the cytoplasm. The enzyme catalyses phosphoenolpyruvate + UDP-N-acetyl-alpha-D-glucosamine = UDP-N-acetyl-3-O-(1-carboxyvinyl)-alpha-D-glucosamine + phosphate. Its pathway is cell wall biogenesis; peptidoglycan biosynthesis. In terms of biological role, cell wall formation. Adds enolpyruvyl to UDP-N-acetylglucosamine. The protein is UDP-N-acetylglucosamine 1-carboxyvinyltransferase of Acidovorax ebreus (strain TPSY) (Diaphorobacter sp. (strain TPSY)).